A 396-amino-acid polypeptide reads, in one-letter code: Mitogen-activated protein kinase mpkC (396 aa).

Residues 20–299 enclose the Protein kinase domain; sequence YSDLQPVGLG…AAKALEHPYL (280 aa). ATP-binding positions include 26 to 34 and K49; that span reads VGLGAFGLV. D141 functions as the Proton acceptor in the catalytic mechanism. Residue T171 is modified to Phosphothreonine. The TXY signature appears at 171–173; sequence TGY. Y173 carries the phosphotyrosine modification.

It belongs to the protein kinase superfamily. Ser/Thr protein kinase family. MAP kinase subfamily. HOG1 sub-subfamily. Requires Mg(2+) as cofactor. In terms of processing, dually phosphorylated on Thr-171 and Tyr-173, which activates the enzyme.

The catalysed reaction is L-seryl-[protein] + ATP = O-phospho-L-seryl-[protein] + ADP + H(+). The enzyme catalyses L-threonyl-[protein] + ATP = O-phospho-L-threonyl-[protein] + ADP + H(+). Activated by tyrosine and threonine phosphorylation. Its function is as follows. Mitogen-activated protein kinase required for growth on media where sorbitol or mannitol is the sole carbon source. This is Mitogen-activated protein kinase mpkC (mpkC) from Aspergillus niger (strain ATCC MYA-4892 / CBS 513.88 / FGSC A1513).